A 120-amino-acid polypeptide reads, in one-letter code: Succinate dehydrogenase hydrophobic membrane anchor subunit (120 aa).

The Cytoplasmic portion of the chain corresponds to 1-19 (MVYDFKAEIVKAKNSGSHH). A helical transmembrane segment spans residues 20–40 (WLLQRVTGIILALCSIWLIYF). At 41–62 (TLTNKNNDINIIMWELKKPFNV) the chain is on the periplasmic side. Residues 63–84 (VALLITVAISLYHAMLGMRVVI) traverse the membrane as a helical segment. H75 contacts heme. Topologically, residues 85 to 94 (EDYVSCHKLR) are cytoplasmic. A ubiquinone is bound at residue Y87. Residues 95 to 118 (NTLIVIVQLFCIVTIAAFVVAMFY) form a helical membrane-spanning segment.

As to quaternary structure, part of an enzyme complex containing four subunits: a flavoprotein, an iron-sulfur protein, plus two membrane-anchoring proteins, SdhC and SdhD. It depends on heme as a cofactor.

It localises to the cell inner membrane. The protein operates within carbohydrate metabolism; tricarboxylic acid cycle. In terms of biological role, membrane-anchoring subunit of succinate dehydrogenase (SDH). The sequence is that of Succinate dehydrogenase hydrophobic membrane anchor subunit (sdhD) from Rickettsia felis (strain ATCC VR-1525 / URRWXCal2) (Rickettsia azadi).